The following is a 118-amino-acid chain: MARAKRGVIARARHKKILKQAKGYYGARSRVYRVAFQAVIKAGQYAYRDRRQKKRQFRQLWIARINAAARQNGMSYSRFINGLRKASIEIDRKILADIAVFDKAAFAALVEKAKGALA.

The protein belongs to the bacterial ribosomal protein bL20 family.

In terms of biological role, binds directly to 23S ribosomal RNA and is necessary for the in vitro assembly process of the 50S ribosomal subunit. It is not involved in the protein synthesizing functions of that subunit. In Proteus mirabilis (strain HI4320), this protein is Large ribosomal subunit protein bL20.